A 434-amino-acid polypeptide reads, in one-letter code: Adenylosuccinate synthetase (434 aa).

Residues 11–17 (GDEGKGK) and 39–41 (GHT) each bind GTP. The Proton acceptor role is filled by Asp12. Asp12 and Gly39 together coordinate Mg(2+). Residues 12-15 (DEGK), 37-40 (NAGH), Thr134, Arg148, Asn230, Thr245, and Arg309 contribute to the IMP site. The Proton donor role is filled by His40. 305 to 311 (VTTGRKR) serves as a coordination point for substrate. Residues Arg311, 337 to 339 (KLD), and 419 to 421 (GTG) each bind GTP.

Belongs to the adenylosuccinate synthetase family. In terms of assembly, homodimer. The cofactor is Mg(2+).

Its subcellular location is the cytoplasm. It catalyses the reaction IMP + L-aspartate + GTP = N(6)-(1,2-dicarboxyethyl)-AMP + GDP + phosphate + 2 H(+). It functions in the pathway purine metabolism; AMP biosynthesis via de novo pathway; AMP from IMP: step 1/2. Functionally, plays an important role in the de novo pathway and in the salvage pathway of purine nucleotide biosynthesis. Catalyzes the first committed step in the biosynthesis of AMP from IMP. This is Adenylosuccinate synthetase from Lachancea thermotolerans (strain ATCC 56472 / CBS 6340 / NRRL Y-8284) (Yeast).